Here is a 449-residue protein sequence, read N- to C-terminus: Streptomycin-6-phosphate phosphatase (449 aa).

The N-terminal stretch at 1-32 (MRFAYGRLPWRRGAVLGSALLVLVTAPAASTA) is a signal peptide. Aspartate 50 lines the Mg(2+) pocket. Residue aspartate 50 coordinates Zn(2+). Residue serine 99 is the Phosphoserine intermediate of the active site. The Mg(2+) site is built by aspartate 151 and threonine 153. The segment at 268–290 (APGGTAPQRCATRNPGRPAGTPD) is disordered. Residue glutamate 321 participates in Mg(2+) binding. 5 residues coordinate Zn(2+): aspartate 326, histidine 330, aspartate 368, histidine 369, and histidine 412.

This sequence belongs to the alkaline phosphatase family. Mg(2+) serves as cofactor. It depends on Zn(2+) as a cofactor.

Its subcellular location is the secreted. It catalyses the reaction streptomycin 6-phosphate + H2O = streptomycin + phosphate. It participates in antibiotic biosynthesis; streptomycin biosynthesis. Specifically cleaves both streptomycin-6-phosphate and, more slowly, streptomycin-3''-phosphate during the biosynthesis of streptomycin. The protein is Streptomycin-6-phosphate phosphatase (strK) of Streptomyces griseus.